We begin with the raw amino-acid sequence, 170 residues long: Large ribosomal subunit protein uL10 (170 aa).

The protein belongs to the universal ribosomal protein uL10 family. As to quaternary structure, part of the ribosomal stalk of the 50S ribosomal subunit. The N-terminus interacts with L11 and the large rRNA to form the base of the stalk. The C-terminus forms an elongated spine to which L12 dimers bind in a sequential fashion forming a multimeric L10(L12)X complex.

Its function is as follows. Forms part of the ribosomal stalk, playing a central role in the interaction of the ribosome with GTP-bound translation factors. The polypeptide is Large ribosomal subunit protein uL10 (Jannaschia sp. (strain CCS1)).